The chain runs to 426 residues: MNFDVVIIGGGLAGLTCGIALQKQGKQCAIINNGQAAIDFSSGSMDLLSCLPSGQKVHVFCEAFSELSQQAPEHPYCLLGQHQVVAKVQQFEQFMQELGLVGSHKQNHLRVTPLGGLRHTWLSPKSVPVIAENEHFPYRQIAILGIEGYHDFQPQILVDNLKQNAAFSHCDFSIGYLNIPELDYLRQNAREFRSVNIAQLLEHKLAFEDLVQEIKQAAGNAQAVFLLACFGLDDQRFFDSLKQATALALFELPTLPPSLIGIRQYRTLRDQFEKLGGLLLNGDRAVRAEFDGDRVARIFTTLHQEESINAAHFVLASGSFFSNGLVAEFERVKEPIFDLDIIGNKAFINSERVSWTDKRFAAAQPYQSAGVAINHHCQVYKNGHLIPNLYAIGNVIGGFWGIEQGCASGVSVVTALTVAEWVGGTK.

Belongs to the anaerobic G-3-P dehydrogenase subunit B family. Composed of a catalytic GlpA/B dimer and of membrane bound GlpC. The cofactor is FMN.

The catalysed reaction is a quinone + sn-glycerol 3-phosphate = dihydroxyacetone phosphate + a quinol. It functions in the pathway polyol metabolism; glycerol degradation via glycerol kinase pathway; glycerone phosphate from sn-glycerol 3-phosphate (anaerobic route): step 1/1. Functionally, conversion of glycerol 3-phosphate to dihydroxyacetone. Uses fumarate or nitrate as electron acceptor. The sequence is that of Anaerobic glycerol-3-phosphate dehydrogenase subunit B from Haemophilus ducreyi (strain 35000HP / ATCC 700724).